A 287-amino-acid chain; its full sequence is Glycine--tRNA ligase alpha subunit (287 aa).

Belongs to the class-II aminoacyl-tRNA synthetase family. As to quaternary structure, tetramer of two alpha and two beta subunits.

It is found in the cytoplasm. It carries out the reaction tRNA(Gly) + glycine + ATP = glycyl-tRNA(Gly) + AMP + diphosphate. In Campylobacter jejuni subsp. doylei (strain ATCC BAA-1458 / RM4099 / 269.97), this protein is Glycine--tRNA ligase alpha subunit.